Reading from the N-terminus, the 262-residue chain is MLDPIAIQLGPLAIRWYALCIVTGLILAVYLTMKEAPRKKIIPDDILDFILVAFPLAILGARLYYVIFRFDYYSQNLGEIFAIWNGGLAIYGGLITGALVLYIFADRKLINTWDFLDIAAPSVMIAQSLGRWGNFFNQEAYGATVDNLDYLPGFIRDQMYIEGSYRQPTFLYESLWNLLGFALILIFRRKWKSLRRGHITAFYLIWYGFGRMVIEGMRTDSLMFFGLRVSQWLSVVFIGLGIMIVIYQNRKKAPYYITEEEN.

The next 4 membrane-spanning stretches (helical) occupy residues 9 to 29 (LGPLAIRWYALCIVTGLILAV), 41 to 61 (IIPDDILDFILVAFPLAILGA), 80 to 100 (IFAIWNGGLAIYGGLITGALV), and 109 to 129 (LINTWDFLDIAAPSVMIAQSL). Arg-131 contacts a 1,2-diacyl-sn-glycero-3-phospho-(1'-sn-glycerol). 3 helical membrane passes run 167–187 (QPTFLYESLWNLLGFALILIF), 197–217 (GHITAFYLIWYGFGRMVIEGM), and 226–246 (GLRVSQWLSVVFIGLGIMIVI).

Belongs to the Lgt family.

It localises to the cell membrane. It carries out the reaction L-cysteinyl-[prolipoprotein] + a 1,2-diacyl-sn-glycero-3-phospho-(1'-sn-glycerol) = an S-1,2-diacyl-sn-glyceryl-L-cysteinyl-[prolipoprotein] + sn-glycerol 1-phosphate + H(+). Its pathway is protein modification; lipoprotein biosynthesis (diacylglyceryl transfer). Catalyzes the transfer of the diacylglyceryl group from phosphatidylglycerol to the sulfhydryl group of the N-terminal cysteine of a prolipoprotein, the first step in the formation of mature lipoproteins. The chain is Phosphatidylglycerol--prolipoprotein diacylglyceryl transferase from Streptococcus pneumoniae (strain Taiwan19F-14).